The primary structure comprises 701 residues: Polyribonucleotide nucleotidyltransferase (701 aa).

Positions 487 and 493 each coordinate Mg(2+). The KH domain occupies 554 to 613 (PTMLQMKIDSDKIRDVIGKGGATIRAICEETKASIDIEDDGSVKIYGETKEAAEAAKQRV). One can recognise an S1 motif domain in the interval 623-691 (GKIYVGKVER…NRGRIKLSIK (69 aa)).

This sequence belongs to the polyribonucleotide nucleotidyltransferase family. Component of the RNA degradosome, which is a multiprotein complex involved in RNA processing and mRNA degradation. Mg(2+) serves as cofactor.

It localises to the cytoplasm. It catalyses the reaction RNA(n+1) + phosphate = RNA(n) + a ribonucleoside 5'-diphosphate. Functionally, involved in mRNA degradation. Catalyzes the phosphorolysis of single-stranded polyribonucleotides processively in the 3'- to 5'-direction. The polypeptide is Polyribonucleotide nucleotidyltransferase (Pseudomonas paraeruginosa (strain DSM 24068 / PA7) (Pseudomonas aeruginosa (strain PA7))).